Here is a 269-residue protein sequence, read N- to C-terminus: 4-hydroxy-tetrahydrodipicolinate reductase (269 aa).

NAD(+)-binding positions include 8-13 and E34; that span reads GAGGRM. Residue R35 participates in NADP(+) binding. Residues 98 to 100 and 122 to 125 each bind NAD(+); these read GTT and ASNY. The Proton donor/acceptor role is filled by H155. Position 156 (H156) interacts with (S)-2,3,4,5-tetrahydrodipicolinate. K159 acts as the Proton donor in catalysis. (S)-2,3,4,5-tetrahydrodipicolinate is bound at residue 165–166; it reads GT.

This sequence belongs to the DapB family.

The protein localises to the cytoplasm. It catalyses the reaction (S)-2,3,4,5-tetrahydrodipicolinate + NAD(+) + H2O = (2S,4S)-4-hydroxy-2,3,4,5-tetrahydrodipicolinate + NADH + H(+). The catalysed reaction is (S)-2,3,4,5-tetrahydrodipicolinate + NADP(+) + H2O = (2S,4S)-4-hydroxy-2,3,4,5-tetrahydrodipicolinate + NADPH + H(+). It functions in the pathway amino-acid biosynthesis; L-lysine biosynthesis via DAP pathway; (S)-tetrahydrodipicolinate from L-aspartate: step 4/4. Functionally, catalyzes the conversion of 4-hydroxy-tetrahydrodipicolinate (HTPA) to tetrahydrodipicolinate. The sequence is that of 4-hydroxy-tetrahydrodipicolinate reductase from Haemophilus ducreyi (strain 35000HP / ATCC 700724).